Reading from the N-terminus, the 452-residue chain is Bifunctional protein GlmU (452 aa).

Residues 1–226 (MSLHIIILAA…LHEVEGVNNR (226 aa)) form a pyrophosphorylase region. UDP-N-acetyl-alpha-D-glucosamine-binding positions include 8–11 (LAAG), Lys22, Gln73, 78–79 (GT), 100–102 (YGD), Gly136, Glu151, Asn166, and Asn224. Asp102 contributes to the Mg(2+) binding site. Asn224 lines the Mg(2+) pocket. The tract at residues 227 to 247 (IQLAALERAYQQQVAEELMLA) is linker. The N-acetyltransferase stretch occupies residues 248-452 (GATLRDPARV…IDGWTRPVKK (205 aa)). Arg330 and Lys348 together coordinate UDP-N-acetyl-alpha-D-glucosamine. His360 (proton acceptor) is an active-site residue. Positions 363 and 374 each coordinate UDP-N-acetyl-alpha-D-glucosamine. Acetyl-CoA is bound by residues Ala377, 383 to 384 (NY), Ser402, Ala420, and Arg437.

The protein in the N-terminal section; belongs to the N-acetylglucosamine-1-phosphate uridyltransferase family. In the C-terminal section; belongs to the transferase hexapeptide repeat family. In terms of assembly, homotrimer. The cofactor is Mg(2+).

It is found in the cytoplasm. It catalyses the reaction alpha-D-glucosamine 1-phosphate + acetyl-CoA = N-acetyl-alpha-D-glucosamine 1-phosphate + CoA + H(+). The enzyme catalyses N-acetyl-alpha-D-glucosamine 1-phosphate + UTP + H(+) = UDP-N-acetyl-alpha-D-glucosamine + diphosphate. The protein operates within nucleotide-sugar biosynthesis; UDP-N-acetyl-alpha-D-glucosamine biosynthesis; N-acetyl-alpha-D-glucosamine 1-phosphate from alpha-D-glucosamine 6-phosphate (route II): step 2/2. It participates in nucleotide-sugar biosynthesis; UDP-N-acetyl-alpha-D-glucosamine biosynthesis; UDP-N-acetyl-alpha-D-glucosamine from N-acetyl-alpha-D-glucosamine 1-phosphate: step 1/1. Its pathway is bacterial outer membrane biogenesis; LPS lipid A biosynthesis. Functionally, catalyzes the last two sequential reactions in the de novo biosynthetic pathway for UDP-N-acetylglucosamine (UDP-GlcNAc). The C-terminal domain catalyzes the transfer of acetyl group from acetyl coenzyme A to glucosamine-1-phosphate (GlcN-1-P) to produce N-acetylglucosamine-1-phosphate (GlcNAc-1-P), which is converted into UDP-GlcNAc by the transfer of uridine 5-monophosphate (from uridine 5-triphosphate), a reaction catalyzed by the N-terminal domain. This is Bifunctional protein GlmU from Hahella chejuensis (strain KCTC 2396).